Reading from the N-terminus, the 438-residue chain is Adenosylhomocysteinase (438 aa).

3 residues coordinate substrate: Thr61, Asp137, and Glu162. An NAD(+)-binding site is contributed by Thr163–Thr165. Substrate is bound by residues Lys192 and Asp196. NAD(+)-binding positions include Asn197, Gly226 to Gly231, Glu249, Asn284, Ile305 to His307, and Asn352.

The protein belongs to the adenosylhomocysteinase family. It depends on NAD(+) as a cofactor.

It localises to the cytoplasm. It carries out the reaction S-adenosyl-L-homocysteine + H2O = L-homocysteine + adenosine. It participates in amino-acid biosynthesis; L-homocysteine biosynthesis; L-homocysteine from S-adenosyl-L-homocysteine: step 1/1. Functionally, may play a key role in the regulation of the intracellular concentration of adenosylhomocysteine. This chain is Adenosylhomocysteinase, found in Flavobacterium psychrophilum (strain ATCC 49511 / DSM 21280 / CIP 103535 / JIP02/86).